The sequence spans 254 residues: HLA class II histocompatibility antigen, DR alpha chain (254 aa).

An N-terminal signal peptide occupies residues 1 to 25; sequence MAISGVPVLGFFIIAVLMSAQESWA. Residues 26–109 are alpha-1; sequence IKEEHVIIQA…KRSNYTPITN (84 aa). Residues 26 to 216 lie on the Extracellular side of the membrane; sequence IKEEHVIIQA…APSPLPETTE (191 aa). N-linked (GlcNAc...) asparagine glycans are attached at residues asparagine 103 and asparagine 143. The alpha-2 stretch occupies residues 110 to 203; it reads VPPEVTVLTN…GLDEPLLKHW (94 aa). Residues 112–204 form the Ig-like C1-type domain; that stretch reads PEVTVLTNSP…LDEPLLKHWE (93 aa). An intrachain disulfide couples cysteine 132 to cysteine 188. The connecting peptide stretch occupies residues 204–216; the sequence is EFDAPSPLPETTE. The helical transmembrane segment at 217-239 threads the bilayer; that stretch reads NVVCALGLTVGLVGIIIGTIFII. Topologically, residues 240–254 are cytoplasmic; that stretch reads KGLRKSNAAERRGPL. Residue lysine 244 forms a Glycyl lysine isopeptide (Lys-Gly) (interchain with G-Cter in ubiquitin) linkage.

It belongs to the MHC class II family. As to quaternary structure, heterotrimer that consists of an alpha chain HLA-DRA, a beta chain HLA-DRB and a peptide (peptide-MHCII). Newly synthesized alpha and beta chains forms a heterodimer (MHCII) that associates with the CD74/invariant chain (Ii) in the endoplasmic reticulum (ER). Ii is a trimer composed of three subunits and each subunit interacts with one MHCII dimer, blocking the peptide-binding cleft. As a result, MHCII molecules cannot bind peptides present in the ER. The complex of MHCII and CD74/Ii is transported in vesicles from ER to Golgi to lysosomes, where it encounters antigenic peptides generated via proteolysis of endocytosed antigens. MHCII dimers are dissociated from CD74/Ii by the combined action of proteolysis and HLA-DM. Lysosomal enzymes such as cathepsin, degrade CD74/Ii leaving a 24 amino acid remnant called class II-associated Ii or CLIP. Interacts (via the peptide binding cleft) with CLIP; this interaction inhibits antigen peptide binding before entry in the endosomal compartment. The displacement of CLIP and replacement by a high affinity peptide in lysosomes is performed by HLA-DM heterodimer. HLA-DM catalyzes CLIP dissociation from MHCII, stabilizes empty MHCII and mediates the selection of high affinity peptides. Interacts with HLA-DM heterodimer; this interaction is direct. Interacts (via alpha-1 domain) with TCR (via CDRs). Interacts (via alpha-2 domain) with CD4 (via Ig-like V-type domain); this interaction increases the affinity of TCR for peptide-MHCII. (Microbial infection) Interacts with Epstein-Barr virus BZLF2/gp42. In terms of assembly, (Microbial infection) Interacts with Staphylococcus aureus enterotoxin A/entA, enterotoxin B/entB, enterotoxin C1/entC1, enterotoxin D/entD, and enterotoxin H/entH. In terms of processing, ubiquitinated by MARCHF1 or MARCHF8 at Lys-244 leading to down-regulation of MHCII. When associated with ubiquitination of the beta chain at 'Lys-254', the down-regulation of MHCII may be highly effective. In terms of tissue distribution, expressed in professional APCs: macrophages, dendritic cells and B cells (at protein level). Expressed in thymic epithelial cells (at protein level).

The protein resides in the cell membrane. It is found in the endoplasmic reticulum membrane. It localises to the early endosome membrane. The protein localises to the late endosome membrane. Its subcellular location is the lysosome membrane. The protein resides in the autolysosome membrane. Its function is as follows. An alpha chain of antigen-presenting major histocompatibility complex class II (MHCII) molecule. In complex with the beta chain HLA-DRB, displays antigenic peptides on professional antigen presenting cells (APCs) for recognition by alpha-beta T cell receptor (TCR) on HLA-DR-restricted CD4-positive T cells. This guides antigen-specific T-helper effector functions, both antibody-mediated immune response and macrophage activation, to ultimately eliminate the infectious agents and transformed cells. Typically presents extracellular peptide antigens of 10 to 30 amino acids that arise from proteolysis of endocytosed antigens in lysosomes. In the tumor microenvironment, presents antigenic peptides that are primarily generated in tumor-resident APCs likely via phagocytosis of apoptotic tumor cells or macropinocytosis of secreted tumor proteins. Presents peptides derived from intracellular proteins that are trapped in autolysosomes after macroautophagy, a mechanism especially relevant for T cell selection in the thymus and central immune tolerance. The selection of the immunodominant epitopes follows two processing modes: 'bind first, cut/trim later' for pathogen-derived antigenic peptides and 'cut first, bind later' for autoantigens/self-peptides. The anchor residue at position 1 of the peptide N-terminus, usually a large hydrophobic residue, is essential for high affinity interaction with MHCII molecules. The protein is HLA class II histocompatibility antigen, DR alpha chain (HLA-DRA) of Homo sapiens (Human).